The chain runs to 263 residues: Nitrogenase iron protein 2 (263 aa).

9-16 provides a ligand contact to ATP; sequence GKGGIGKS. C92 contacts [4Fe-4S] cluster. R95 is subject to ADP-ribosylarginine; by dinitrogenase reductase ADP-ribosyltransferase. C127 serves as a coordination point for [4Fe-4S] cluster.

This sequence belongs to the NifH/BchL/ChlL family. Homodimer. [4Fe-4S] cluster serves as cofactor. The reversible ADP-ribosylation of Arg-95 inactivates the nitrogenase reductase and regulates nitrogenase activity.

It carries out the reaction N2 + 8 reduced [2Fe-2S]-[ferredoxin] + 16 ATP + 16 H2O = H2 + 8 oxidized [2Fe-2S]-[ferredoxin] + 2 NH4(+) + 16 ADP + 16 phosphate + 6 H(+). In terms of biological role, the key enzymatic reactions in nitrogen fixation are catalyzed by the nitrogenase complex, which has 2 components: the iron protein and the molybdenum-iron protein. In Methanobacterium ivanovii, this protein is Nitrogenase iron protein 2 (nifH2).